The sequence spans 123 residues: Small ribosomal subunit protein uS12 (123 aa).

At aspartate 89 the chain carries 3-methylthioaspartic acid. The segment at 100–123 (GSLDTSGVKGRNQGRSKYGTKKPK) is disordered. A compositionally biased stretch (basic residues) spans 111-123 (NQGRSKYGTKKPK).

It belongs to the universal ribosomal protein uS12 family. In terms of assembly, part of the 30S ribosomal subunit. Contacts proteins S8 and S17. May interact with IF1 in the 30S initiation complex.

Functionally, with S4 and S5 plays an important role in translational accuracy. In terms of biological role, interacts with and stabilizes bases of the 16S rRNA that are involved in tRNA selection in the A site and with the mRNA backbone. Located at the interface of the 30S and 50S subunits, it traverses the body of the 30S subunit contacting proteins on the other side and probably holding the rRNA structure together. The combined cluster of proteins S8, S12 and S17 appears to hold together the shoulder and platform of the 30S subunit. This is Small ribosomal subunit protein uS12 from Pseudomonas syringae pv. syringae (strain B728a).